The following is a 274-amino-acid chain: Rhamnulose-1-phosphate aldolase (274 aa).

E117 is a catalytic residue. 3 residues coordinate Zn(2+): H141, H143, and H212.

It belongs to the aldolase class II family. RhaD subfamily. In terms of assembly, homotetramer. It depends on Zn(2+) as a cofactor.

It is found in the cytoplasm. The enzyme catalyses L-rhamnulose 1-phosphate = (S)-lactaldehyde + dihydroxyacetone phosphate. Its pathway is carbohydrate degradation; L-rhamnose degradation; glycerone phosphate from L-rhamnose: step 3/3. Catalyzes the reversible cleavage of L-rhamnulose-1-phosphate to dihydroxyacetone phosphate (DHAP) and L-lactaldehyde. The protein is Rhamnulose-1-phosphate aldolase of Escherichia coli O157:H7.